Consider the following 349-residue polypeptide: Probable trehalose-phosphate phosphatase H (349 aa).

The protein belongs to the trehalose phosphatase family. A divalent metal cation serves as cofactor.

The catalysed reaction is alpha,alpha-trehalose 6-phosphate + H2O = alpha,alpha-trehalose + phosphate. The protein operates within glycan biosynthesis; trehalose biosynthesis. Functionally, removes the phosphate from trehalose 6-phosphate to produce free trehalose. Trehalose accumulation in plant may improve abiotic stress tolerance. The chain is Probable trehalose-phosphate phosphatase H (TPPH) from Arabidopsis thaliana (Mouse-ear cress).